The following is a 541-amino-acid chain: ATP synthase subunit alpha (541 aa).

173-180 (GDRQTGKT) provides a ligand contact to ATP. Residues 517–527 (GIEPGVEEHES) show a composition bias toward basic and acidic residues. The tract at residues 517 to 541 (GIEPGVEEHESLGATAVNQETIVKK) is disordered. Over residues 532 to 541 (AVNQETIVKK) the composition is skewed to polar residues.

Belongs to the ATPase alpha/beta chains family. F-type ATPases have 2 components, CF(1) - the catalytic core - and CF(0) - the membrane proton channel. CF(1) has five subunits: alpha(3), beta(3), gamma(1), delta(1), epsilon(1). CF(0) has three main subunits: a(1), b(2) and c(9-12). The alpha and beta chains form an alternating ring which encloses part of the gamma chain. CF(1) is attached to CF(0) by a central stalk formed by the gamma and epsilon chains, while a peripheral stalk is formed by the delta and b chains.

It localises to the cell membrane. It carries out the reaction ATP + H2O + 4 H(+)(in) = ADP + phosphate + 5 H(+)(out). Functionally, produces ATP from ADP in the presence of a proton gradient across the membrane. The alpha chain is a regulatory subunit. The protein is ATP synthase subunit alpha of Kocuria rhizophila (strain ATCC 9341 / DSM 348 / NBRC 103217 / DC2201).